We begin with the raw amino-acid sequence, 334 residues long: GTP 3',8-cyclase (334 aa).

Positions 11–236 constitute a Radical SAM core domain; that stretch reads GFNRKIDYLR…ESTESSMGPA (226 aa). A GTP-binding site is contributed by Arg-20. Positions 27 and 31 each coordinate [4Fe-4S] cluster. Residue Tyr-33 coordinates S-adenosyl-L-methionine. Cys-34 provides a ligand contact to [4Fe-4S] cluster. GTP is bound at residue Arg-69. Gly-73 serves as a coordination point for S-adenosyl-L-methionine. Thr-100 contacts GTP. Position 124 (Ser-124) interacts with S-adenosyl-L-methionine. Lys-161 provides a ligand contact to GTP. Position 195 (Met-195) interacts with S-adenosyl-L-methionine. Residues Cys-260 and Cys-263 each contribute to the [4Fe-4S] cluster site. A GTP-binding site is contributed by 265 to 267; sequence RVR. Residue Cys-277 participates in [4Fe-4S] cluster binding.

Belongs to the radical SAM superfamily. MoaA family. In terms of assembly, monomer and homodimer. Requires [4Fe-4S] cluster as cofactor.

The catalysed reaction is GTP + AH2 + S-adenosyl-L-methionine = (8S)-3',8-cyclo-7,8-dihydroguanosine 5'-triphosphate + 5'-deoxyadenosine + L-methionine + A + H(+). Its pathway is cofactor biosynthesis; molybdopterin biosynthesis. Its function is as follows. Catalyzes the cyclization of GTP to (8S)-3',8-cyclo-7,8-dihydroguanosine 5'-triphosphate. This is GTP 3',8-cyclase from Pseudomonas putida (strain ATCC 700007 / DSM 6899 / JCM 31910 / BCRC 17059 / LMG 24140 / F1).